The chain runs to 148 residues: Ribonuclease pancreatic (148 aa).

The signal sequence occupies residues 1–25; that stretch reads MGLEKSLILLPLLVLVFGWVQSSLG. Residues lysine 32 and arginine 35 each coordinate substrate. Histidine 36 serves as the catalytic Proton acceptor. 4 disulfides stabilise this stretch: cysteine 50-cysteine 108, cysteine 64-cysteine 119, cysteine 82-cysteine 134, and cysteine 89-cysteine 96. The N-linked (GlcNAc...) asparagine glycan is linked to asparagine 58. 65–69 provides a ligand contact to substrate; sequence KPVNT. N-linked (GlcNAc...) asparagine glycosylation is present at asparagine 86. Residues lysine 90 and arginine 109 each coordinate substrate. Histidine 143 acts as the Proton donor in catalysis.

Belongs to the pancreatic ribonuclease family. As to quaternary structure, monomer. Interacts with and forms tight 1:1 complexes with RNH1. Dimerization of two such complexes may occur. Interaction with RNH1 inhibits this protein. As to expression, pancreas.

The protein localises to the secreted. The catalysed reaction is an [RNA] containing cytidine + H2O = an [RNA]-3'-cytidine-3'-phosphate + a 5'-hydroxy-ribonucleotide-3'-[RNA].. It catalyses the reaction an [RNA] containing uridine + H2O = an [RNA]-3'-uridine-3'-phosphate + a 5'-hydroxy-ribonucleotide-3'-[RNA].. Endonuclease that catalyzes the cleavage of RNA on the 3' side of pyrimidine nucleotides. Acts on single-stranded and double-stranded RNA. The protein is Ribonuclease pancreatic (RNASE1) of Chionomys nivalis (European snow vole).